We begin with the raw amino-acid sequence, 131 residues long: Glycine cleavage system H protein (131 aa).

Residues 24–106 (VYCVGITEHA…YTDGWLFKIK (83 aa)) form the Lipoyl-binding domain. K65 is modified (N6-lipoyllysine).

It belongs to the GcvH family. In terms of assembly, the glycine cleavage system is composed of four proteins: P, T, L and H. The cofactor is (R)-lipoate.

In terms of biological role, the glycine cleavage system catalyzes the degradation of glycine. The H protein shuttles the methylamine group of glycine from the P protein to the T protein. This chain is Glycine cleavage system H protein, found in Sodalis glossinidius (strain morsitans).